The primary structure comprises 344 residues: Biotin synthase (344 aa).

Residues 36 to 260 (NQIQISTLLS…MMPTSYIRLS (225 aa)) form the Radical SAM core domain. Residues Cys-51, Cys-55, and Cys-58 each contribute to the [4Fe-4S] cluster site. Residues Cys-95, Cys-126, Cys-186, and Arg-258 each coordinate [2Fe-2S] cluster.

It belongs to the radical SAM superfamily. Biotin synthase family. Homodimer. Requires [4Fe-4S] cluster as cofactor. [2Fe-2S] cluster serves as cofactor.

The catalysed reaction is (4R,5S)-dethiobiotin + (sulfur carrier)-SH + 2 reduced [2Fe-2S]-[ferredoxin] + 2 S-adenosyl-L-methionine = (sulfur carrier)-H + biotin + 2 5'-deoxyadenosine + 2 L-methionine + 2 oxidized [2Fe-2S]-[ferredoxin]. Its pathway is cofactor biosynthesis; biotin biosynthesis; biotin from 7,8-diaminononanoate: step 2/2. Functionally, catalyzes the conversion of dethiobiotin (DTB) to biotin by the insertion of a sulfur atom into dethiobiotin via a radical-based mechanism. This Buchnera aphidicola subsp. Baizongia pistaciae (strain Bp) protein is Biotin synthase.